A 196-amino-acid polypeptide reads, in one-letter code: MSSKEQKTPEGQAPEEIITEQHDDVEAVEPEVSAEQVDPRDEKIANLEAQLAEAQKREREVMLRAKADEDNLRRRTEQDIEKAHKFALEKFVNELLPVIDSLDRALEVADKANPELAPMVEGIELTLKSMLDVVRKFGVEVIADTNVPLDPNVHQAIAMVESEDVAAGNVLAVMQKGYTLNGRTIRAAMVTVAKAK.

Residues 1 to 41 (MSSKEQKTPEGQAPEEIITEQHDDVEAVEPEVSAEQVDPRD) form a disordered region.

This sequence belongs to the GrpE family. In terms of assembly, homodimer.

The protein resides in the cytoplasm. Functionally, participates actively in the response to hyperosmotic and heat shock by preventing the aggregation of stress-denatured proteins, in association with DnaK and GrpE. It is the nucleotide exchange factor for DnaK and may function as a thermosensor. Unfolded proteins bind initially to DnaJ; upon interaction with the DnaJ-bound protein, DnaK hydrolyzes its bound ATP, resulting in the formation of a stable complex. GrpE releases ADP from DnaK; ATP binding to DnaK triggers the release of the substrate protein, thus completing the reaction cycle. Several rounds of ATP-dependent interactions between DnaJ, DnaK and GrpE are required for fully efficient folding. The sequence is that of Protein GrpE from Klebsiella pneumoniae subsp. pneumoniae (strain ATCC 700721 / MGH 78578).